The chain runs to 127 residues: Fluoride-specific ion channel FluC (127 aa).

4 helical membrane-spanning segments follow: residues 6–26, 37–57, 67–87, and 96–116; these read LAIS…GLGF, TLLA…FFAA, LLVI…SAEV, and LLWA…MTLL. Na(+) contacts are provided by Gly-75 and Thr-78.

Belongs to the fluoride channel Fluc/FEX (TC 1.A.43) family.

It localises to the cell inner membrane. It catalyses the reaction fluoride(in) = fluoride(out). With respect to regulation, na(+) is not transported, but it plays an essential structural role and its presence is essential for fluoride channel function. Functionally, fluoride-specific ion channel. Important for reducing fluoride concentration in the cell, thus reducing its toxicity. The sequence is that of Fluoride-specific ion channel FluC from Tolumonas auensis (strain DSM 9187 / NBRC 110442 / TA 4).